The following is a 280-amino-acid chain: Ribosomal RNA-processing protein 7 homolog A (280 aa).

Residues 59–159 (RTLFVLNVPP…SGIHKWISDY (101 aa)) form the RRM domain. S99 is modified (phosphoserine).

Belongs to the RRP7 family. As to quaternary structure, part of the small subunit (SSU) processome, composed of more than 70 proteins and the RNA chaperone small nucleolar RNA (snoRNA) U3. Interacts with NOL6; required for NOL6 localization to nucleolus. In terms of tissue distribution, expressed in the apical radial glial cells in the developing brain.

It is found in the nucleus. The protein localises to the nucleolus. Its subcellular location is the cell projection. The protein resides in the cilium. It localises to the cytoplasm. It is found in the cytoskeleton. The protein localises to the microtubule organizing center. Its subcellular location is the centrosome. Nucleolar protein that is involved in ribosomal RNA (rRNA) processing. Also plays a role in primary cilia resorption, and cell cycle progression in neurogenesis and neocortex development. Part of the small subunit (SSU) processome, first precursor of the small eukaryotic ribosomal subunit. During the assembly of the SSU processome in the nucleolus, many ribosome biogenesis factors, an RNA chaperone and ribosomal proteins associate with the nascent pre-rRNA and work in concert to generate RNA folding, modifications, rearrangements and cleavage as well as targeted degradation of pre-ribosomal RNA by the RNA exosome. This is Ribosomal RNA-processing protein 7 homolog A from Homo sapiens (Human).